A 337-amino-acid polypeptide reads, in one-letter code: Ribosomal RNA small subunit methyltransferase C (337 aa).

The protein belongs to the methyltransferase superfamily. RsmC family. Monomer.

It localises to the cytoplasm. The enzyme catalyses guanosine(1207) in 16S rRNA + S-adenosyl-L-methionine = N(2)-methylguanosine(1207) in 16S rRNA + S-adenosyl-L-homocysteine + H(+). Functionally, specifically methylates the guanine in position 1207 of 16S rRNA in the 30S particle. In Proteus mirabilis (strain HI4320), this protein is Ribosomal RNA small subunit methyltransferase C.